The chain runs to 340 residues: Phenylalanine--tRNA ligase alpha subunit (340 aa).

Mg(2+) is bound at residue E255.

It belongs to the class-II aminoacyl-tRNA synthetase family. Phe-tRNA synthetase alpha subunit type 1 subfamily. In terms of assembly, tetramer of two alpha and two beta subunits. Requires Mg(2+) as cofactor.

The protein localises to the cytoplasm. The catalysed reaction is tRNA(Phe) + L-phenylalanine + ATP = L-phenylalanyl-tRNA(Phe) + AMP + diphosphate + H(+). The polypeptide is Phenylalanine--tRNA ligase alpha subunit (Syntrophomonas wolfei subsp. wolfei (strain DSM 2245B / Goettingen)).